Reading from the N-terminus, the 362-residue chain is S-adenosylmethionine:tRNA ribosyltransferase-isomerase (362 aa).

Belongs to the QueA family. In terms of assembly, monomer.

The protein localises to the cytoplasm. The catalysed reaction is 7-aminomethyl-7-carbaguanosine(34) in tRNA + S-adenosyl-L-methionine = epoxyqueuosine(34) in tRNA + adenine + L-methionine + 2 H(+). Its pathway is tRNA modification; tRNA-queuosine biosynthesis. Its function is as follows. Transfers and isomerizes the ribose moiety from AdoMet to the 7-aminomethyl group of 7-deazaguanine (preQ1-tRNA) to give epoxyqueuosine (oQ-tRNA). The polypeptide is S-adenosylmethionine:tRNA ribosyltransferase-isomerase (Methylobacterium sp. (strain 4-46)).